The sequence spans 935 residues: Protein translocase subunit SecA (935 aa).

ATP-binding positions include Q86, 104-108 (GEGKT), and D494. The tract at residues 879–935 (EQAATARAQQHSSAAVAAPEQGATQRGAFGQRVSAADDAAPANRAERRAQKKPTKRH) is disordered.

It belongs to the SecA family. In terms of assembly, monomer and homodimer. Part of the essential Sec protein translocation apparatus which comprises SecA, SecYEG and auxiliary proteins SecDF. Other proteins may also be involved.

Its subcellular location is the cell membrane. The protein resides in the cytoplasm. It carries out the reaction ATP + H2O + cellular proteinSide 1 = ADP + phosphate + cellular proteinSide 2.. Functionally, part of the Sec protein translocase complex. Interacts with the SecYEG preprotein conducting channel. Has a central role in coupling the hydrolysis of ATP to the transfer of proteins into and across the cell membrane, serving as an ATP-driven molecular motor driving the stepwise translocation of polypeptide chains across the membrane. The chain is Protein translocase subunit SecA from Leifsonia xyli subsp. xyli (strain CTCB07).